The chain runs to 271 residues: MKTYRAKRKYLSESEDDVFSSSPTQSPETSPLQPPNESRLNIKAAQAVSPCQKRAKVVKKPAKTKAPVQMTLSLGQTTSTTCKTCGMTYQVAYGPDISAHKSFHSTALNGPKWKPSVSAVVVDKSKTYTVYKSRLLSHPCVSQFLKLVNSELNAPEPILSSQAAVYVYVVDQRAVGCVLVDRITKCRHVDIQTGTLGLKEYPAVMGVSRMYVSQLFRRTGIVTKLLDLAKSDFIYGMELEKNQVAFTQPSEGGLKVAENWAGTVRVYREGE.

The segment at methionine 1–serine 38 is disordered. The segment covering serine 20–proline 31 has biased composition (low complexity). The CCHH-type zinc-finger motif lies at threonine 80–histidine 104.

The protein belongs to the acetyltransferase family. ECO subfamily.

The protein resides in the nucleus. Its function is as follows. Probable acetyltransferase required for the establishment of sister chromatid cohesion and couple the processes of cohesion and DNA replication to ensure that only sister chromatids become paired together. In contrast to the structural cohesins, the deposition and establishment factors are required only during S phase. Acts by acetylating the cohesin complex component SMC3. The polypeptide is N-acetyltransferase ECO1 (ECO1) (Yarrowia lipolytica (strain CLIB 122 / E 150) (Yeast)).